We begin with the raw amino-acid sequence, 337 residues long: HTH-type transcriptional repressor PurR (337 aa).

One can recognise an HTH lacI-type domain in the interval 2 to 56 (ATIKDVAKLAAVSTTTVSHVINKTRFVAEATQKRVWEAVEELNYAPSAVARSLKC). Residues 4-23 (IKDVAKLAAVSTTTVSHVIN) constitute a DNA-binding region (H-T-H motif). Residues 48–56 (SAVARSLKC) mediate DNA binding. The hypoxanthine site is built by Phe73, Lys189, Thr191, Phe220, and Asp276.

As to quaternary structure, homodimer.

It participates in purine metabolism; purine nucleotide biosynthesis [regulation]. Its function is as follows. Is the main repressor of the genes involved in the de novo synthesis of purine nucleotides, regulating purB, purC, purEK, purF, purHD, purL, purMN and guaBA expression. PurR is allosterically activated to bind its cognate DNA by binding the purine corepressors, hypoxanthine or guanine, thereby effecting transcription repression. The sequence is that of HTH-type transcriptional repressor PurR from Aliivibrio fischeri (strain ATCC 700601 / ES114) (Vibrio fischeri).